The chain runs to 502 residues: MEFSVKSGSPEKQRSACVVVGVFEPRRLSPVAEQLDKISDGYISSLLRRGDLEGKPGQMLLLHQVPGVLSERVLLVGCGKERELDERQYKQIINKTITTLNETGSMEAVCFLTELHVKGRDTYWKVRQAVETTKAGLYSFDQFKTNKAEPRRPLRKLVFNVPTRRELTIGEKAIAHGLAVAKGVRVCRDVANMPPNVCNPAYLASQARRLADAFDNITTKVIGEQEMAELGMNSYLAVARGSDNEAMMAIIEYKGHPDAKPIVLVGKGLTFDSGGISIKPAEGMDEMKYDMGGAASVLGTMHALAQLQLPINVIGVLAGCENMPGGNAYRPGDILTSMSGQTIEVLNTDAEGRLVLCDALTYVDRFDPETVIDVATLTGACIIALGHHTTGLLANHNPLAHELLNASEQAGDRAWRLPLFDEYQEQLESPFADMANIGGRPAGTITAAAFLSRFTKKYNWAHLDIAGTAWKSGKEKGSTGRPVPLLTQFLLNRSGVVIEEKE.

The Mn(2+) site is built by K267 and D272. K279 is a catalytic residue. D290, D349, and E351 together coordinate Mn(2+). R353 is a catalytic residue.

Belongs to the peptidase M17 family. Requires Mn(2+) as cofactor.

It localises to the cytoplasm. It carries out the reaction Release of an N-terminal amino acid, Xaa-|-Yaa-, in which Xaa is preferably Leu, but may be other amino acids including Pro although not Arg or Lys, and Yaa may be Pro. Amino acid amides and methyl esters are also readily hydrolyzed, but rates on arylamides are exceedingly low.. The enzyme catalyses Release of an N-terminal amino acid, preferentially leucine, but not glutamic or aspartic acids.. Its function is as follows. Presumably involved in the processing and regular turnover of intracellular proteins. Catalyzes the removal of unsubstituted N-terminal amino acids from various peptides. This Aeromonas hydrophila subsp. hydrophila (strain ATCC 7966 / DSM 30187 / BCRC 13018 / CCUG 14551 / JCM 1027 / KCTC 2358 / NCIMB 9240 / NCTC 8049) protein is Probable cytosol aminopeptidase.